The following is a 624-amino-acid chain: DNA damage response protein Mdb1 (624 aa).

3 disordered regions span residues 177 to 237 (ERIP…DDES), 249 to 386 (GETK…KNKH), and 591 to 624 (IGKRNVSKASRTGQGRKRSSRSSWNKPSAKEQRT). Basic and acidic residues-rich tracts occupy residues 200–217 (DEKLVLDGQHVEGDHSSD) and 225–235 (EDQKQLNKTDD). Polar residues predominate over residues 250–263 (ETKSPSSVSQSLSG). A phosphoserine mark is found at S253 and S283. Over residues 294 to 305 (NISDSSIKNNSI) the composition is skewed to low complexity. Composition is skewed to basic and acidic residues over residues 306 to 316 (HSDEVNPEVRP) and 325 to 352 (EESKRSAPEIALKEKESTSQDESNREAE). The segment covering 356-386 (ISTNYSFPSSSLEDQPDKNVQSSAVENKNKH) has biased composition (polar residues). Residues 376 to 468 (QSSAVENKNK…KVLDFRSYKY (93 aa)) form the BRCT domain.

As to quaternary structure, homodimer. Interacts (via BRCT domain) with hta1 peptide containing the S/T-Q motif in vitro; this interaction requires phosphorylation of the hta1 peptide at the S/T-Q motif.

It localises to the nucleus. Its subcellular location is the chromosome. It is found in the cytoplasm. The protein resides in the cytoskeleton. The protein localises to the spindle. In terms of biological role, involved in DNA damage response (DDR) mediated through its interaction with phosphorylated H2A proteins hta1 and hta2 which mark the discrete foci of DNA damage. The protein is DNA damage response protein Mdb1 of Schizosaccharomyces pombe (strain 972 / ATCC 24843) (Fission yeast).